We begin with the raw amino-acid sequence, 325 residues long: Glutarate 2-hydroxylase (325 aa).

Fe cation is bound by residues H160, D162, and H292.

The protein belongs to the glutarate hydroxylase family. As to quaternary structure, homotetramer. Fe(2+) serves as cofactor.

The catalysed reaction is glutarate + 2-oxoglutarate + O2 = (S)-2-hydroxyglutarate + succinate + CO2. Its pathway is amino-acid degradation. Functionally, acts as an alpha-ketoglutarate-dependent dioxygenase catalyzing hydroxylation of glutarate (GA) to L-2-hydroxyglutarate (L2HG). Functions in a L-lysine degradation pathway that proceeds via cadaverine, glutarate and L-2-hydroxyglutarate. This Escherichia coli O7:K1 (strain IAI39 / ExPEC) protein is Glutarate 2-hydroxylase.